A 117-amino-acid chain; its full sequence is Large ribosomal subunit protein eL34 (117 aa).

Phosphoserine is present on Ser-12. N6-acetyllysine is present on residues Lys-36 and Lys-43. Residue Lys-108 forms a Glycyl lysine isopeptide (Lys-Gly) (interchain with G-Cter in SUMO2) linkage.

The protein belongs to the eukaryotic ribosomal protein eL34 family. As to quaternary structure, component of the large ribosomal subunit.

It is found in the cytoplasm. Its subcellular location is the cytosol. The protein localises to the endoplasmic reticulum. Component of the large ribosomal subunit. The ribosome is a large ribonucleoprotein complex responsible for the synthesis of proteins in the cell. In Rattus norvegicus (Rat), this protein is Large ribosomal subunit protein eL34 (Rpl34).